Here is a 162-residue protein sequence, read N- to C-terminus: Heat shock protein beta-6 (162 aa).

The tract at residues 1-72 (MEIRVPVQPS…PTAQVPTDPG (72 aa)) is involved in stabilization of the HSPB1:HSBP6 heterodimer. Residue serine 16 is modified to Phosphoserine. Glutamine 31 participates in a covalent cross-link: Isoglutamyl lysine isopeptide (Gln-Lys) (interchain with K-162). The sHSP domain occupies 56-162 (RAPSVALPTA…ASLPSPPAAK (107 aa)). At glutamine 66 the chain carries Deamidated glutamine. Phosphoserine is present on serine 157. Lysine 162 is covalently cross-linked (Isoglutamyl lysine isopeptide (Lys-Gln) (interchain with Q-31)).

The protein belongs to the small heat shock protein (HSP20) family. Homodimer. Small heat shock proteins form high molecular mass oligomers containing variable number of monomers; these oligomers display a very flexible quaternary structure easily exchanging their subunits. Heterooligomer with HSPB1; formed through oligomerization of HSPB1:HSBP6 dimers; subunit exchange leads to formation of at least two different heterooligomeric complexes, differing in variable quantities of HSPB1 and HSPB6 homodimers in addition to HSPB1:HSPB6 heterodimers. Heterooligomer with CRYAB; large heterooligomers consist of CRYAB homodimers and HSPB5:HSPB6 heterodimers but lacking HSPB6 homodimers. Interacts with BAG3. Interacts (phosphorylated) with YWHAZ. Interacts with PDE4A and PDE4D; required for maintenance of the non-phosphorylated state of HSPB6 under basal conditions. Interacts with KDR. Interacts with PRKD1. Post-translationally, the N-terminus is blocked. Phosphorylated at Ser-16 by PKA and probably PKD1K; required to protect cardiomyocytes from apoptosis. In terms of tissue distribution, widely expressed. High expression in muscle tissues.

It localises to the cytoplasm. The protein resides in the nucleus. It is found in the secreted. Small heat shock protein which functions as a molecular chaperone probably maintaining denatured proteins in a folding-competent state. Seems to have versatile functions in various biological processes. Plays a role in regulating muscle function such as smooth muscle vasorelaxation and cardiac myocyte contractility. May regulate myocardial angiogenesis implicating KDR. Overexpression mediates cardioprotection and angiogenesis after induced damage. Stabilizes monomeric YWHAZ thereby supporting YWHAZ chaperone-like activity. The sequence is that of Heat shock protein beta-6 (Hspb6) from Rattus norvegicus (Rat).